A 32-amino-acid chain; its full sequence is Photosystem II reaction center protein T (32 aa).

A helical membrane pass occupies residues Ala-3–Phe-23.

It belongs to the PsbT family. In terms of assembly, PSII is composed of 1 copy each of membrane proteins PsbA, PsbB, PsbC, PsbD, PsbE, PsbF, PsbH, PsbI, PsbJ, PsbK, PsbL, PsbM, PsbT, PsbX, PsbY, Psb30/Ycf12, peripheral proteins PsbO, CyanoQ (PsbQ), PsbU, PsbV and a large number of cofactors. It forms dimeric complexes.

The protein localises to the cellular thylakoid membrane. Found at the monomer-monomer interface of the photosystem II (PS II) dimer, plays a role in assembly and dimerization of PSII. PSII is a light-driven water plastoquinone oxidoreductase, using light energy to abstract electrons from H(2)O, generating a proton gradient subsequently used for ATP formation. The polypeptide is Photosystem II reaction center protein T (Prochlorococcus marinus (strain MIT 9301)).